The following is a 590-amino-acid chain: (-)-alpha-terpineol synthase (590 aa).

Positions 339, 343, 483, 487, and 491 each coordinate Mg(2+). The DDXXD motif signature appears at 339–343 (DDVYD).

It belongs to the terpene synthase family. The cofactor is Mg(2+).

The enzyme catalyses (2E)-geranyl diphosphate + H2O = (S)-alpha-terpineol + diphosphate. Its pathway is secondary metabolite biosynthesis; terpenoid biosynthesis. Its function is as follows. Mediates the conversion of geranyl diphosphate into alpha-terpineol, a monoterpenol. Monoterpenols contribute to the final grape and wine aroma and flavor. Also forms some 1,8-cineole and traces of other monoterpenoids. This Vitis vinifera (Grape) protein is (-)-alpha-terpineol synthase.